A 150-amino-acid chain; its full sequence is Cyanate hydratase (150 aa).

Active-site residues include Arg-91, Glu-94, and Ser-117.

The protein belongs to the cyanase family.

It catalyses the reaction cyanate + hydrogencarbonate + 3 H(+) = NH4(+) + 2 CO2. Catalyzes the reaction of cyanate with bicarbonate to produce ammonia and carbon dioxide. This is Cyanate hydratase from Synechococcus sp. (strain CC9311).